The sequence spans 305 residues: Ribosomal RNA small subunit methyltransferase H (305 aa).

S-adenosyl-L-methionine contacts are provided by residues 46–48 (GGH), aspartate 65, phenylalanine 92, aspartate 108, and histidine 115.

It belongs to the methyltransferase superfamily. RsmH family.

Its subcellular location is the cytoplasm. It carries out the reaction cytidine(1402) in 16S rRNA + S-adenosyl-L-methionine = N(4)-methylcytidine(1402) in 16S rRNA + S-adenosyl-L-homocysteine + H(+). Functionally, specifically methylates the N4 position of cytidine in position 1402 (C1402) of 16S rRNA. This Trichormus variabilis (strain ATCC 29413 / PCC 7937) (Anabaena variabilis) protein is Ribosomal RNA small subunit methyltransferase H.